The primary structure comprises 111 residues: Large ribosomal subunit protein uL22 (111 aa).

It belongs to the universal ribosomal protein uL22 family. Part of the 50S ribosomal subunit.

In terms of biological role, this protein binds specifically to 23S rRNA; its binding is stimulated by other ribosomal proteins, e.g. L4, L17, and L20. It is important during the early stages of 50S assembly. It makes multiple contacts with different domains of the 23S rRNA in the assembled 50S subunit and ribosome. Functionally, the globular domain of the protein is located near the polypeptide exit tunnel on the outside of the subunit, while an extended beta-hairpin is found that lines the wall of the exit tunnel in the center of the 70S ribosome. In Citrifermentans bemidjiense (strain ATCC BAA-1014 / DSM 16622 / JCM 12645 / Bem) (Geobacter bemidjiensis), this protein is Large ribosomal subunit protein uL22.